Reading from the N-terminus, the 380-residue chain is MKVEAFIPAVLLLCFGVMLCLKSSCALQIGNNNELKNYISWEDLRVVEDGRIERSFSIKENSNWVTTNANANANATNVRRVIVVDKNGGGDSVTVQGAVDMVPDSNSQRVKIFILPGIYREKVIVPKSKPYISFIGNESYAGDTVISWSDKASDLGCDGKELGTYRTASVSIESDFFCATAITFENTVVAEAGEQGRQAVALRIIGDKAVFYRVRVLGSQDTLFDDNGSHYFYQCYIQGNVDFIFGNAKSLYQDCDIHSTAKRYGAIAAHHRDSETEDTGFSFVNCDISGTGQIYLGRAWGNYSRTVYSNCFIADIITPVGWSDWKHPERQRKVMFGEYNCRGRGAERGGRVPWSKTLTRDEVKPFLGREFIYGDQWLRL.

A signal peptide spans 1–26 (MKVEAFIPAVLLLCFGVMLCLKSSCA). N-linked (GlcNAc...) asparagine glycans are attached at residues N74 and N137. Substrate contacts are provided by T164 and Q198. D221 serves as the catalytic Proton donor. N227 is a glycosylation site (N-linked (GlcNAc...) asparagine). C235 and C255 are disulfide-bonded. Residue D242 is the Nucleophile of the active site. The substrate site is built by R298 and W300. Residue N302 is glycosylated (N-linked (GlcNAc...) asparagine).

Belongs to the pectinesterase family. As to expression, expressed in flower buds, siliques, developing guard cells, floral nectares, at the stigmatic surface, in the hypocotyl-root transition zone and the area of lateral root emergence. Not expressed in mature leaves.

It is found in the secreted. Its subcellular location is the cell wall. The enzyme catalyses [(1-&gt;4)-alpha-D-galacturonosyl methyl ester](n) + n H2O = [(1-&gt;4)-alpha-D-galacturonosyl](n) + n methanol + n H(+). The protein operates within glycan metabolism; pectin degradation; 2-dehydro-3-deoxy-D-gluconate from pectin: step 1/5. Pectinesterase required for cell type-specific pectin degradation to separate microspores. This is Pectinesterase QRT1 from Arabidopsis thaliana (Mouse-ear cress).